The chain runs to 201 residues: MTIRYPNGHAYRAPAKKIGSQFSSTNTNYGKRGMTLEEELNESNTYYEVNGVAVVHKKPTPIRIVKVDYPKRSAAVIKEAYFSTASTTDYNGVYRGHYLDFDAKETRNTTSFPLQNFHQHQIDHMRACTTQGGICFAIIKFVTRQEIYLYRAQDLFTFWDAQQQGGRKSIPYATIAQDGIQIPAELQLPVPYLKAVDQLLS.

Mg(2+)-binding residues include threonine 87, aspartate 89, aspartate 102, and glutamine 121.

This sequence belongs to the RecU family. Requires Mg(2+) as cofactor.

Its subcellular location is the cytoplasm. It carries out the reaction Endonucleolytic cleavage at a junction such as a reciprocal single-stranded crossover between two homologous DNA duplexes (Holliday junction).. Its function is as follows. Endonuclease that resolves Holliday junction intermediates in genetic recombination. Cleaves mobile four-strand junctions by introducing symmetrical nicks in paired strands. Promotes annealing of linear ssDNA with homologous dsDNA. Required for DNA repair, homologous recombination and chromosome segregation. This Levilactobacillus brevis (strain ATCC 367 / BCRC 12310 / CIP 105137 / JCM 1170 / LMG 11437 / NCIMB 947 / NCTC 947) (Lactobacillus brevis) protein is Holliday junction resolvase RecU.